Reading from the N-terminus, the 553-residue chain is MGLRSTTLVLAATSSLLGGLIFGYELGIISGALLMLKTVFQLTCFEQEALVSAVLFGALLASLIGGFIIDRSGRRTSIMGSNLVVLAGSIILIATSSFWWLVVGRVTVGFAISISSMACCIYVSEIVRPHQRGTLVSLYETGITVGILISYAMNYFLSAVNDGWKYMFGLAIIPAAFQFIVILFLPSKPHTLNFWEQDSDNGFIELEEAGESGEFKPDTYDKQYTFLDLFRSKDNMRTRTLLGLGLVLFQQFTGQPNVLYYASTIFRSVGFQSNSSAVLASVGLGVVKVASTLIAICFADKAGRRILLLAGCIVMTIAISGIGIVSFMVELDSHRDCGSIRSKNTSYGDSNASQLLGIIHAGTPTINTKDNLAHQLAMVIQSPSLSNSAGSKHTASMFPNSTVPPAGPDSNYAILNWITLLSMMAFVSAFSIGFGPMTWLVLSEIYPADIRGRAFAFCNSFNWAANLLITLTFLEVIGSIGLGWTFLLYGGVGLLAIAFIYFFIPETKGQSLEEIDQQLSSKRISKRRETSKGVRKRPSTGPPYQRVGKSNWT.

The Cytoplasmic segment spans residues 1–15 (MGLRSTTLVLAATSS). The chain crosses the membrane as a helical span at residues 16–36 (LLGGLIFGYELGIISGALLML). Topologically, residues 37–48 (KTVFQLTCFEQE) are extracellular. Residues 49-69 (ALVSAVLFGALLASLIGGFII) traverse the membrane as a helical segment. Residues 70–82 (DRSGRRTSIMGSN) are Cytoplasmic-facing. A helical membrane pass occupies residues 83–103 (LVVLAGSIILIATSSFWWLVV). The Extracellular portion of the chain corresponds to 104-105 (GR). Residues 106–126 (VTVGFAISISSMACCIYVSEI) form a helical membrane-spanning segment. Topologically, residues 127–132 (VRPHQR) are cytoplasmic. A helical transmembrane segment spans residues 133-153 (GTLVSLYETGITVGILISYAM). The Extracellular segment spans residues 154 to 165 (NYFLSAVNDGWK). A helical membrane pass occupies residues 166-186 (YMFGLAIIPAAFQFIVILFLP). Residues 187–240 (SKPHTLNFWEQDSDNGFIELEEAGESGEFKPDTYDKQYTFLDLFRSKDNMRTRT) lie on the Cytoplasmic side of the membrane. A helical membrane pass occupies residues 241 to 261 (LLGLGLVLFQQFTGQPNVLYY). Residue 250–251 (QQ) coordinates D-glucose. At 262–277 (ASTIFRSVGFQSNSSA) the chain is on the extracellular side. A glycan (N-linked (GlcNAc...) asparagine) is linked at Asn274. A helical transmembrane segment spans residues 278–298 (VLASVGLGVVKVASTLIAICF). Residues 299–305 (ADKAGRR) are Cytoplasmic-facing. Residues 306-326 (ILLLAGCIVMTIAISGIGIVS) form a helical membrane-spanning segment. The Extracellular segment spans residues 327–413 (FMVELDSHRD…PPAGPDSNYA (87 aa)). Asn344, Asn351, and Asn400 each carry an N-linked (GlcNAc...) asparagine glycan. The chain crosses the membrane as a helical span at residues 414–434 (ILNWITLLSMMAFVSAFSIGF). The Cytoplasmic portion of the chain corresponds to 435 to 462 (GPMTWLVLSEIYPADIRGRAFAFCNSFN). A D-glucose-binding site is contributed by Trp439. Residues 463–482 (WAANLLITLTFLEVIGSIGL) form a helical membrane-spanning segment. Residue Gly483 is a topological domain, extracellular. The chain crosses the membrane as a helical span at residues 484–504 (WTFLLYGGVGLLAIAFIYFFI). Topologically, residues 505–553 (PETKGQSLEEIDQQLSSKRISKRRETSKGVRKRPSTGPPYQRVGKSNWT) are cytoplasmic. The segment at 522-553 (KRISKRRETSKGVRKRPSTGPPYQRVGKSNWT) is disordered.

It belongs to the major facilitator superfamily. Sugar transporter (TC 2.A.1.1) family. Glucose transporter subfamily.

The protein resides in the endomembrane system. It is found in the cytoplasm. It localises to the perinuclear region. It carries out the reaction D-glucose(out) = D-glucose(in). Functionally, facilitative glucose transporter required for the development of the cardiovascular system. This is Solute carrier family 2, facilitated glucose transporter member 10 from Xenopus laevis (African clawed frog).